A 544-amino-acid polypeptide reads, in one-letter code: MAASSANKSRPLANFHPTVWGYHFLSYTHEITNQEKVEVDEYKETIRKMLVEAPEGSEQKLVLIDAMQRLGVAYHFHNEIETSIQNIFDAPKQNNNLHIVSLRFRLVRQQGHYMSSDVFKQFTNQDGKFKETLTNDVQGLLSLYEASYLRVRDEEILEEALAFTTTHLKSIVSTMSNNNNSLKVEVSEALTQPIRMTLPRMEARRYISIYENNDAHNHLLLKFAKLDFNMLQKLHQRELSDLTRWWKDLDFANKYPYARDRLVECYFWILGVYFEPKYSRARKMMTKVLKMTSIIDDTFDAYATFDELEPFNDAIQRWDANAIDSIPPYMRPAYQAFLDIYSEMEQVLSKKGKLDRVYYAKNEMKKLVRAYFKETQWLNDCDHIPKYEEHMENSLVSGGYMMIPTTCLVGMEEFISIETFEWLMNDPLIVRASSLIARAMNDIVGHEVEQERGHVASLIECYMKDYGASKQEAYAKFKKDVTNAWKDINKEFFRPTEVPMFVLERVLNLTRAAEPLYKEKDAYTNAKGKLKNMINSILIESVKI.

Mg(2+)-binding residues include aspartate 296, aspartate 300, and glutamate 449. The DDXXD motif motif lies at 296-300 (DDTFD).

Belongs to the terpene synthase family. Mg(2+) is required as a cofactor. Requires Mn(2+) as cofactor.

Its subcellular location is the cytoplasm. It catalyses the reaction (2E,6E)-farnesyl diphosphate = (1E,4E)-germacrene B + diphosphate. The protein operates within secondary metabolite biosynthesis; terpenoid biosynthesis. Involved in the biosynthesis of germacrene B. The chain is (E,E)-germacrene B synthase (SSTLH1) from Solanum habrochaites (Wild tomato).